Consider the following 237-residue polypeptide: MAPVDIPDRDRLIVALDLPDLRVAEAMVDRLGDSVGFYKIGYQLAYAGGLPLARALVGAGKKVFVDLKLHDIGNTVARGVESLSHLGASFLTVHAYPQTMKAAVEARGSSKVKILAVTVLTSYDDRDLADAGYRFGVRDLVEARARQAQAIGVDGLVCSPEEAAHLRGIVGPEMDLVTPGIRPAGAAAGDQKRIMTPAKAIAAGASYLVVGRPVLDAPDPKAAADAIVAEIAAARGS.

Residues aspartate 17, lysine 39, 66-75, threonine 121, arginine 182, glutamine 191, glycine 211, and arginine 212 contribute to the substrate site; that span reads DLKLHDIGNT. Residue lysine 68 is the Proton donor of the active site.

Belongs to the OMP decarboxylase family. Type 1 subfamily. In terms of assembly, homodimer.

It carries out the reaction orotidine 5'-phosphate + H(+) = UMP + CO2. The protein operates within pyrimidine metabolism; UMP biosynthesis via de novo pathway; UMP from orotate: step 2/2. Catalyzes the decarboxylation of orotidine 5'-monophosphate (OMP) to uridine 5'-monophosphate (UMP). The protein is Orotidine 5'-phosphate decarboxylase of Rhodopseudomonas palustris (strain TIE-1).